The primary structure comprises 360 residues: Mannose-1-phosphate guanyltransferase beta-B (360 aa).

Belongs to the transferase hexapeptide repeat family.

It carries out the reaction alpha-D-mannose 1-phosphate + GTP + H(+) = GDP-alpha-D-mannose + diphosphate. It functions in the pathway nucleotide-sugar biosynthesis; GDP-alpha-D-mannose biosynthesis; GDP-alpha-D-mannose from alpha-D-mannose 1-phosphate (GTP route): step 1/1. Functionally, catalyzes the formation of GDP-mannose, an essential precursor of glycan moieties of glycoproteins and glycolipids. The protein is Mannose-1-phosphate guanyltransferase beta-B (gmppb-b) of Xenopus laevis (African clawed frog).